The chain runs to 158 residues: NADH-quinone oxidoreductase subunit B (158 aa).

4 residues coordinate [4Fe-4S] cluster: C37, C38, C102, and C132.

Belongs to the complex I 20 kDa subunit family. NDH-1 is composed of 14 different subunits. Subunits NuoB, C, D, E, F, and G constitute the peripheral sector of the complex. [4Fe-4S] cluster serves as cofactor.

It localises to the cell inner membrane. The catalysed reaction is a quinone + NADH + 5 H(+)(in) = a quinol + NAD(+) + 4 H(+)(out). In terms of biological role, NDH-1 shuttles electrons from NADH, via FMN and iron-sulfur (Fe-S) centers, to quinones in the respiratory chain. Couples the redox reaction to proton translocation (for every two electrons transferred, four hydrogen ions are translocated across the cytoplasmic membrane), and thus conserves the redox energy in a proton gradient. This is NADH-quinone oxidoreductase subunit B from Alkalilimnicola ehrlichii (strain ATCC BAA-1101 / DSM 17681 / MLHE-1).